A 407-amino-acid polypeptide reads, in one-letter code: Probable tRNA pseudouridine synthase D (407 aa).

Asp81 (nucleophile) is an active-site residue. Residues 151 to 372 form the TRUD domain; sequence GFPNYFGIQR…PGGRRELLIR (222 aa).

This sequence belongs to the pseudouridine synthase TruD family.

It carries out the reaction uridine(13) in tRNA = pseudouridine(13) in tRNA. In terms of biological role, could be responsible for synthesis of pseudouridine from uracil-13 in transfer RNAs. The protein is Probable tRNA pseudouridine synthase D of Pyrococcus furiosus (strain ATCC 43587 / DSM 3638 / JCM 8422 / Vc1).